Consider the following 767-residue polypeptide: Photosystem I P700 chlorophyll a apoprotein A1 (767 aa).

The disordered stretch occupies residues 1 to 22; sequence MTISPPESGEKNKKVLEDPVKA. The segment covering 8–22 has biased composition (basic and acidic residues); sequence SGEKNKKVLEDPVKA. Transmembrane regions (helical) follow at residues 76–99, 162–185, 201–225, 309–327, 368–391, 407–433, 455–477, and 558–576; these read IFSAHFGHLAVIFIWMSAAFFHGA, LMALAIGAVVMAALMLHAGIFHYH, LNHHIAGLVGLGSLAWAGHCIHIGA, VSHHHLAFGVIAIIGGHMY, RHAQLAVNLAMLGSISILVSHHMY, LGLFTHHMWIGGLFIVGAGAHAGIAMV, ALISHLNWVCMWLGFHSFGLYIH, and LMIHHIHAFQIHVTVLILL. Cys-600 and Cys-609 together coordinate [4Fe-4S] cluster. 2 helical membrane passes run 616 to 637 and 681 to 703; these read HVFLALFWMYNCLSIVIFHFSW and ISMYGLMFLGAHFIWAFSLMFLF. Residue His-692 coordinates divinylchlorophyll a'. Met-700 and Tyr-708 together coordinate divinyl chlorophyll a. Phylloquinone is bound at residue Trp-709. Residues 741–761 form a helical membrane-spanning segment; it reads AVGVTHFLVGGIATTWAFFHA.

The protein belongs to the PsaA/PsaB family. As to quaternary structure, the PsaA/B heterodimer binds the P700 divinyl chlorophyll special pair and subsequent electron acceptors. PSI consists of a core antenna complex that captures photons, and an electron transfer chain that converts photonic excitation into a charge separation. The cyanobacterial PSI reaction center is composed of one copy each of PsaA,B,C,D,E,F,I,J,K,L,M and X, and forms trimeric complexes. The cofactor is PSI electron transfer chain: 5 divinyl chlorophyll a, 1 divinyl chlorophyll a', 2 phylloquinones and 3 4Fe-4S clusters. PSI core antenna: 90 divinyl chlorophyll a, 22 carotenoids, 3 phospholipids and 1 galactolipid. P700 is a divinyl chlorophyll a/divinyl chlorophyll a' dimer, A0 is one or more divinyl chlorophyll a, A1 is one or both phylloquinones and FX is a shared 4Fe-4S iron-sulfur center..

Its subcellular location is the cellular thylakoid membrane. The enzyme catalyses reduced [plastocyanin] + hnu + oxidized [2Fe-2S]-[ferredoxin] = oxidized [plastocyanin] + reduced [2Fe-2S]-[ferredoxin]. Functionally, psaA and PsaB bind P700, the primary electron donor of photosystem I (PSI), as well as the electron acceptors A0, A1 and FX. PSI is a plastocyanin/cytochrome c6-ferredoxin oxidoreductase, converting photonic excitation into a charge separation, which transfers an electron from the donor P700 chlorophyll pair to the spectroscopically characterized acceptors A0, A1, FX, FA and FB in turn. Oxidized P700 is reduced on the lumenal side of the thylakoid membrane by plastocyanin or cytochrome c6. The sequence is that of Photosystem I P700 chlorophyll a apoprotein A1 from Prochlorococcus marinus (strain MIT 9301).